Consider the following 509-residue polypeptide: Maturase K (509 aa).

Belongs to the intron maturase 2 family. MatK subfamily.

The protein localises to the plastid. It is found in the chloroplast. In terms of biological role, usually encoded in the trnK tRNA gene intron. Probably assists in splicing its own and other chloroplast group II introns. This chain is Maturase K, found in Jacaranda mimosifolia (Jacaranda).